Here is a 176-residue protein sequence, read N- to C-terminus: Translation initiation factor IF-3 (176 aa).

This sequence belongs to the IF-3 family. In terms of assembly, monomer.

The protein resides in the cytoplasm. Its function is as follows. IF-3 binds to the 30S ribosomal subunit and shifts the equilibrium between 70S ribosomes and their 50S and 30S subunits in favor of the free subunits, thus enhancing the availability of 30S subunits on which protein synthesis initiation begins. This Streptococcus equi subsp. zooepidemicus (strain H70) protein is Translation initiation factor IF-3.